A 761-amino-acid chain; its full sequence is Ribonucleoside-diphosphate reductase subunit alpha (761 aa).

In terms of domain architecture, ATP-cone spans 5–95 (LFVTKRNGKI…IFHLRKKAFG (91 aa)). ATP contacts are provided by residues Lys9, 15–21 (ELINLDK), Thr55, and Lys91. A GDP-binding site is contributed by Thr209. Cys225 and Cys462 are joined by a disulfide. DTTP contacts are provided by residues 232–234 (DNL), Arg262, and Arg269. GDP is bound at residue Asn437. The Proton acceptor role is filled by Asn437. Cys439 (cysteine radical intermediate) is an active-site residue. GDP is bound by residues Glu441 and 623 to 625 (ETS). The active-site Proton acceptor is Glu441.

The protein belongs to the ribonucleoside diphosphate reductase large chain family. As to quaternary structure, tetramer of two alpha and two beta subunits.

The enzyme catalyses a 2'-deoxyribonucleoside 5'-diphosphate + [thioredoxin]-disulfide + H2O = a ribonucleoside 5'-diphosphate + [thioredoxin]-dithiol. Under complex allosteric control mediated by deoxynucleoside triphosphates and ATP binding to separate specificity and activation sites on the alpha subunit. The type of nucleotide bound at the specificity site determines substrate preference. It seems probable that ATP makes the enzyme reduce CDP and UDP, dGTP favors ADP reduction and dTTP favors GDP reduction. Stimulated by ATP and inhibited by dATP binding to the activity site. Its function is as follows. Provides the precursors necessary for DNA synthesis. Catalyzes the biosynthesis of deoxyribonucleotides from the corresponding ribonucleotides. The polypeptide is Ribonucleoside-diphosphate reductase subunit alpha (nrdA) (Buchnera aphidicola subsp. Baizongia pistaciae (strain Bp)).